We begin with the raw amino-acid sequence, 103 residues long: MKTAWLGTFAASALLVAGYAQADADLAKKNNCIACHQVETKVVGPALKDIAAKYADKDDAATYLAGKIKGGSSGVWGQIPMPPNVNVSDADAKALADWILTLK.

Residues 1 to 22 form the signal peptide; that stretch reads MKTAWLGTFAASALLVAGYAQA. 4 residues coordinate heme c: Cys32, Cys35, His36, and Met81.

In terms of assembly, monomer. Binds 1 heme c group covalently per subunit.

It localises to the periplasm. Functionally, monoheme c-type cytochrome. Probable electron donor to membrane cytochrome oxidase and to periplasmic nitrite reductase. This Nitrosomonas europaea (strain ATCC 19718 / CIP 103999 / KCTC 2705 / NBRC 14298) protein is Cytochrome c-552 (cyt).